We begin with the raw amino-acid sequence, 529 residues long: Bifunctional purine biosynthesis protein PurH (529 aa).

The region spanning methionine 1 to valine 148 is the MGS-like domain. Position 287 is an N6-acetyllysine (lysine 287).

The protein belongs to the PurH family.

The enzyme catalyses (6R)-10-formyltetrahydrofolate + 5-amino-1-(5-phospho-beta-D-ribosyl)imidazole-4-carboxamide = 5-formamido-1-(5-phospho-D-ribosyl)imidazole-4-carboxamide + (6S)-5,6,7,8-tetrahydrofolate. It catalyses the reaction IMP + H2O = 5-formamido-1-(5-phospho-D-ribosyl)imidazole-4-carboxamide. The protein operates within purine metabolism; IMP biosynthesis via de novo pathway; 5-formamido-1-(5-phospho-D-ribosyl)imidazole-4-carboxamide from 5-amino-1-(5-phospho-D-ribosyl)imidazole-4-carboxamide (10-formyl THF route): step 1/1. It functions in the pathway purine metabolism; IMP biosynthesis via de novo pathway; IMP from 5-formamido-1-(5-phospho-D-ribosyl)imidazole-4-carboxamide: step 1/1. The sequence is that of Bifunctional purine biosynthesis protein PurH from Shigella dysenteriae serotype 1 (strain Sd197).